The chain runs to 785 residues: Peptide transporter family 2 (785 aa).

9 consecutive transmembrane segments (helical) span residues 46 to 66 (FSFY…LNFS), 72 to 92 (VLFH…SILA), 99 to 119 (FWTI…LAFS), 134 to 154 (LLGL…VSAF), 167 to 187 (ISLF…ISMW), 208 to 228 (FGIP…GSFW), 303 to 323 (VIVM…QGST), 345 to 365 (MGVL…SIVY), and 382 to 402 (AGGG…QLFV). A glycan (N-linked (GlcNAc...) asparagine) is linked at Asn467. 3 helical membrane-spanning segments follow: residues 670 to 690 (ILWQ…FSIT), 711 to 731 (WLFT…LNIF), and 738 to 758 (MFVF…LAVF).

The protein belongs to the major facilitator superfamily. Proton-dependent oligopeptide transporter (POT/PTR) (TC 2.A.17) family. Expressed in vulval, pharyngeal and anal muscles.

It is found in the membrane. Its function is as follows. Proton-dependent uptake of di- or tripeptides, and to a minor extent tetrapeptides. Transport is independent of sodium and chloride ions. Protein shows high affinity to peptide substrates. The polypeptide is Peptide transporter family 2 (pept-2) (Caenorhabditis elegans).